The sequence spans 171 residues: Putative ankyrin repeat protein PA3287 (171 aa).

ANK repeat units follow at residues Lys-48–Leu-77, Ala-81–Gly-110, and Asp-114–Ala-143.

This Pseudomonas aeruginosa (strain ATCC 15692 / DSM 22644 / CIP 104116 / JCM 14847 / LMG 12228 / 1C / PRS 101 / PAO1) protein is Putative ankyrin repeat protein PA3287.